The sequence spans 346 residues: NADH-ubiquinone oxidoreductase chain 2 (346 aa).

11 helical membrane-spanning segments follow: residues methionine 1–isoleucine 21, histidine 25–serine 45, phenylalanine 60–alanine 80, cysteine 95–phenylalanine 115, leucine 124–methionine 144, leucine 149–glycine 169, isoleucine 178–valine 195, leucine 200–leucine 219, alanine 242–proline 262, glutamate 274–leucine 294, and alanine 326–valine 346.

It belongs to the complex I subunit 2 family.

Its subcellular location is the mitochondrion inner membrane. It catalyses the reaction a ubiquinone + NADH + 5 H(+)(in) = a ubiquinol + NAD(+) + 4 H(+)(out). Functionally, core subunit of the mitochondrial membrane respiratory chain NADH dehydrogenase (Complex I) that is believed to belong to the minimal assembly required for catalysis. Complex I functions in the transfer of electrons from NADH to the respiratory chain. The immediate electron acceptor for the enzyme is believed to be ubiquinone. The chain is NADH-ubiquinone oxidoreductase chain 2 (MT-ND2) from Mareca americana (American wigeon).